We begin with the raw amino-acid sequence, 222 residues long: Phosphatidylinositol phosphate synthase (222 aa).

31–34 (DIVT) is an a CDP-1,2-diacyl-sn-glycerol binding site. 2 helical membrane passes run 32–49 (IVTLAGTAAAVIGALTLF) and 55–74 (WWGAVVVSFFVLADMLDGAM). Positions 68 and 71 each coordinate Mg(2+). Residues glycine 72, arginine 76, and threonine 82 each contribute to the a CDP-1,2-diacyl-sn-glycerol site. Mg(2+)-binding residues include aspartate 89 and aspartate 93. Catalysis depends on aspartate 93, which acts as the Proton acceptor. Helical transmembrane passes span 95-112 (LGDGAVFAGLTWWAAFGL), 118-136 (VVATLICLVTSQVISYIKA), 156-173 (LVIVLIGAGLSDLPFFPL), and 179-196 (VAMWVLAVASVVTLLQRV).

It belongs to the CDP-alcohol phosphatidyltransferase class-I family. As to quaternary structure, homodimer. It depends on Mg(2+) as a cofactor.

The protein resides in the cell membrane. The protein localises to the secreted. It is found in the cell wall. The enzyme catalyses a CDP-1,2-diacyl-sn-glycerol + 1D-myo-inositol 3-phosphate = a 1,2-diacyl-sn-glycero-3-phospho-(1D-myo-inositol-3-phosphate) + CMP + H(+). The catalysed reaction is 1,2-di-(9Z-octadecenoyl)-sn-glycero-3-cytidine-5'-diphosphate + 1D-myo-inositol 3-phosphate = 1,2-di-(9Z-octadecenoyl)-sn-glycero-3-phospho-(1D-myo-inositol-3-phosphate) + CMP + H(+). It carries out the reaction 1,2-dihexadecanoyl-sn-glycero-3-CDP + 1D-myo-inositol 3-phosphate = 1,2-dihexadecanoyl-sn-glycero-3-phospho-(1D-myo-inositol-3-phosphate) + CMP + H(+). It participates in phospholipid metabolism; phosphatidylinositol phosphate biosynthesis. Its activity is regulated as follows. Competitively inhibited by several inositol 1-phosphate analogs, including the phosphonate analog 1-deoxy-1-phosphonomethyl-myo-inositol (Ino-C-P). This leads to inhibition of M.smegmatis growth. Catalyzes the conjugation of the 1'-hydroxyl group of D-myo-inositol-3-phosphate (also named L-myo-inositol-1-phosphate) with a lipid tail of cytidine diphosphate diacylglycerol (CDP-DAG), forming phosphatidylinositol phosphate (PIP) and CMP. PIP is a precursor of phosphatidylinositol (PI) which is an essential lipid for mycobacteria required for formation of their cell wall. Is essential to the survival of M.smegmatis. In Mycolicibacterium smegmatis (strain ATCC 700084 / mc(2)155) (Mycobacterium smegmatis), this protein is Phosphatidylinositol phosphate synthase.